Consider the following 480-residue polypeptide: Immune evasion protein OPG047 (480 aa).

One can recognise a BTB domain in the interval 10 to 90 (CKNILALSMT…SYTGKVYIDS (81 aa)). Positions 125–223 (CVECYMMGIE…NYLSPRGINN (99 aa)) constitute a BACK domain. Kelch repeat units follow at residues 273 to 319 (VVYL…PANN), 320 to 363 (KLYV…SINN), 365 to 408 (IYVM…VFGR), 410 to 447 (LFLVGRNAEFYCESSNTWTLIDDPIYPRDNPELIIVDN), and 448 to 480 (KLLLIGGFYRGSYIDTIEVYNHHTYSWNIWDGK).

The protein belongs to the orthopoxvirus OPG047 family.

Functionally, might have a role in the suppression of host immune response. This Vaccinia virus (strain Copenhagen) (VACV) protein is Immune evasion protein OPG047 (OPG047).